A 381-amino-acid polypeptide reads, in one-letter code: Putative 2-heptyl-3-hydroxy-4(1H)-quinolone synthase AqdB1 (381 aa).

Belongs to the 3-hydroxybenzoate 6-hydroxylase family.

The enzyme catalyses 2-heptyl-4(1H)-quinolone + NADH + O2 + H(+) = 2-heptyl-3-hydroxy-4(1H)-quinolone + NAD(+) + H2O. Its function is as follows. Could be involved in the degradation of the Pseudomonas aeruginosa quorum sensing signal molecule HHQ (2-heptyl-4-quinolone) to anthranilic acid. May catalyze the hydroxylation of HHQ to PQS (2-heptyl-3-hydroxy-4-quinolone). This Rhodococcus erythropolis (Arthrobacter picolinophilus) protein is Putative 2-heptyl-3-hydroxy-4(1H)-quinolone synthase AqdB1.